The following is a 294-amino-acid chain: Probable cobalamin biosynthesis protein CobD (294 aa).

4 helical membrane passes run 52–72 (AGLL…IVPF), 73–93 (YAPF…SFAI), 145–165 (DSVV…AVIY), and 268–288 (IYWL…ATGV).

This sequence belongs to the CobD/CbiB family.

It localises to the cell membrane. It participates in cofactor biosynthesis; adenosylcobalamin biosynthesis. Its function is as follows. Converts cobyric acid to cobinamide by the addition of aminopropanol on the F carboxylic group. The chain is Probable cobalamin biosynthesis protein CobD from Thermococcus kodakarensis (strain ATCC BAA-918 / JCM 12380 / KOD1) (Pyrococcus kodakaraensis (strain KOD1)).